The following is an 815-amino-acid chain: Probable bifunctional folylpolyglutamate synthase/dihydropteroate synthase (815 aa).

The tract at residues 1–416 (MRYDEAANFL…LVAGSLFAVA (416 aa)) is folylpolyglutamate synthase. Residue 47–53 (GSNGKGS) participates in ATP binding. The 251-residue stretch at 553-803 (TAVMGILNVT…DVPENVAAVR (251 aa)) folds into the Pterin-binding domain. The tract at residues 555 to 815 (VMGILNVTPD…EATRTGADAE (261 aa)) is DHPS. N560 contributes to the Mg(2+) binding site. (7,8-dihydropterin-6-yl)methyl diphosphate is bound by residues T600, D633, N652, D722, K758, and 791-793 (RVH).

In the N-terminal section; belongs to the folylpolyglutamate synthase family. It in the C-terminal section; belongs to the DHPS family. Mg(2+) is required as a cofactor.

It catalyses the reaction (6S)-5,6,7,8-tetrahydrofolyl-(gamma-L-Glu)(n) + L-glutamate + ATP = (6S)-5,6,7,8-tetrahydrofolyl-(gamma-L-Glu)(n+1) + ADP + phosphate + H(+). The catalysed reaction is (7,8-dihydropterin-6-yl)methyl diphosphate + 4-aminobenzoate = 7,8-dihydropteroate + diphosphate. Its pathway is cofactor biosynthesis; tetrahydrofolylpolyglutamate biosynthesis. The protein operates within cofactor biosynthesis; tetrahydrofolate biosynthesis; 7,8-dihydrofolate from 2-amino-4-hydroxy-6-hydroxymethyl-7,8-dihydropteridine diphosphate and 4-aminobenzoate: step 1/2. Functionally, can complement an H.volcanii mutant strain that is thymidine auxotroph because it lacks the two dihydrofolate reductase genes encoded by hdrA and hdrB. The sequence is that of Probable bifunctional folylpolyglutamate synthase/dihydropteroate synthase (folP) from Halobacterium salinarum (strain ATCC 700922 / JCM 11081 / NRC-1) (Halobacterium halobium).